Reading from the N-terminus, the 410-residue chain is Elongation factor Tu, apicoplast (410 aa).

A tr-type G domain is found at K10–T214. The G1 stretch occupies residues G19–T26. G19 to T26 serves as a coordination point for GTP. T26 serves as a coordination point for Mg(2+). Positions G60–N64 are G2. Residues D81–G84 are G3. Residues D81 to H85 and N136 to D139 contribute to the GTP site. The interval N136–D139 is G4. The G5 stretch occupies residues S174–L176.

This sequence belongs to the TRAFAC class translation factor GTPase superfamily. Classic translation factor GTPase family. EF-Tu/EF-1A subfamily.

It is found in the plastid. The protein resides in the apicoplast. The enzyme catalyses GTP + H2O = GDP + phosphate + H(+). Functionally, GTP hydrolase that promotes the GTP-dependent binding of aminoacyl-tRNA to the A-site of ribosomes during protein biosynthesis. The chain is Elongation factor Tu, apicoplast (tufA) from Plasmodium falciparum (isolate 3D7).